Reading from the N-terminus, the 294-residue chain is Small ribosomal subunit protein uS2 (294 aa).

Basic and acidic residues predominate over residues 256–274; that stretch reads SGKFIMDEDPDSKKTKTAE. The disordered stretch occupies residues 256-294; that stretch reads SGKFIMDEDPDSKKTKTAEEPSATIEPSTTTTVEVDQNE. Positions 280–294 are enriched in polar residues; sequence IEPSTTTTVEVDQNE.

Belongs to the universal ribosomal protein uS2 family.

This Leptospira interrogans serogroup Icterohaemorrhagiae serovar Lai (strain 56601) protein is Small ribosomal subunit protein uS2.